The chain runs to 150 residues: uncharacterized protein (150 aa).

Positions 5–66 (LDRTDKMLLE…KPNYKKLNLG (62 aa)) constitute an HTH asnC-type domain. A DNA-binding region (H-T-H motif) is located at residues 24 to 43 (IAALSKKLGIPRTTVHYRIK).

This is an uncharacterized protein from Pyrococcus furiosus (strain ATCC 43587 / DSM 3638 / JCM 8422 / Vc1).